Consider the following 180-residue polypeptide: Large ribosomal subunit protein uL5 (180 aa).

It belongs to the universal ribosomal protein uL5 family. In terms of assembly, part of the 50S ribosomal subunit; part of the 5S rRNA/L5/L18/L25 subcomplex. Contacts the 5S rRNA and the P site tRNA. Forms a bridge to the 30S subunit in the 70S ribosome.

Its function is as follows. This is one of the proteins that bind and probably mediate the attachment of the 5S RNA into the large ribosomal subunit, where it forms part of the central protuberance. In the 70S ribosome it contacts protein S13 of the 30S subunit (bridge B1b), connecting the 2 subunits; this bridge is implicated in subunit movement. Contacts the P site tRNA; the 5S rRNA and some of its associated proteins might help stabilize positioning of ribosome-bound tRNAs. The chain is Large ribosomal subunit protein uL5 from Oenococcus oeni (strain ATCC BAA-331 / PSU-1).